A 627-amino-acid chain; its full sequence is Siderophore iron transporter ARN1 (627 aa).

Residues 1–70 (MESVHSRDPV…TEIIGSAYNK (70 aa)) are Extracellular-facing. Residues 71-91 (WYLQAILLLSAFICGYGYGLD) form a helical membrane-spanning segment. Residues 92–110 (GNIRYIYTGYATSSYSEHS) are Cytoplasmic-facing. The helical transmembrane segment at 111 to 131 (LLSTINVINAVVSAASQIIYA) threads the bilayer. Over 132–135 (RLSD) the chain is Extracellular. The helical transmembrane segment at 136-156 (VFGRLYLFISAVILYVVGTII) threads the bilayer. The Cytoplasmic portion of the chain corresponds to 157-167 (QSQAYDVQRYA). The chain crosses the membrane as a helical span at residues 168–188 (AGAIFYNAGYVGVILILLIIL). Over 189-197 (SDFSSLKWR) the chain is Extracellular. The helical transmembrane segment at 198–218 (LLYQFVPTWPFIINTWIAGNI) threads the bilayer. Residues 219-231 (TSRANPVVNWSWD) are Cytoplasmic-facing. Residues 232–252 (VGMWAFIFPLSCVPIVLCMLH) traverse the membrane as a helical segment. Over 253 to 290 (MQWRARKTPEWHALKGQKSYYQEHGFIKILKQLFWMLD) the chain is Extracellular. Residues 291–311 (VVGVLLMGCSLGCILVPLTLA) traverse the membrane as a helical segment. Residues 312 to 323 (GGVKTTWNDSRL) are Cytoplasmic-facing. Residues 324 to 344 (IGPFVLGFVLIPILWIWEYRF) traverse the membrane as a helical segment. Residues 345 to 367 (ARDPILPYRLVKDRAVWSSMGIS) are Extracellular-facing. The helical transmembrane segment at 368 to 388 (FLIDFIYYMAADYLYTVMIVA) threads the bilayer. Topologically, residues 389–398 (VNESVKSATR) are cytoplasmic. Residues 399-419 (IATLSSFVSTVASPFFALLVT) form a helical membrane-spanning segment. The Extracellular portion of the chain corresponds to 420–424 (RCTRL). The chain crosses the membrane as a helical span at residues 425 to 445 (KPFIMFGCALWMVAMGLLYHF). Topologically, residues 446-454 (RGGSQSHSG) are cytoplasmic. The chain crosses the membrane as a helical span at residues 455–475 (IIGALCVWGVGTTLFTYPVTV). Over 476–563 (SVQSAVSHEN…LMNAYKYVQR (88 aa)) the chain is Extracellular. The chain crosses the membrane as a helical span at residues 564–584 (LETIVALVFCVPLIAFSLCLR). The Cytoplasmic segment spans residues 585 to 627 (DPKLTDTVAVEYIEDGEYVDTKDNDPILDWFEKLPSKFTFKRE).

It belongs to the major facilitator superfamily.

It is found in the cell membrane. The protein resides in the endosome membrane. Involved in the transport of siderophore ferrichrome and so has a role in iron homeostasis. This chain is Siderophore iron transporter ARN1 (ARN1), found in Saccharomyces cerevisiae (strain ATCC 204508 / S288c) (Baker's yeast).